The following is a 629-amino-acid chain: tRNA uridine 5-carboxymethylaminomethyl modification enzyme MnmG (629 aa).

Glycine 14–glycine 19 lines the FAD pocket. Glycine 274–phenylalanine 288 lines the NAD(+) pocket.

Belongs to the MnmG family. In terms of assembly, homodimer. Heterotetramer of two MnmE and two MnmG subunits. FAD is required as a cofactor.

The protein resides in the cytoplasm. In terms of biological role, NAD-binding protein involved in the addition of a carboxymethylaminomethyl (cmnm) group at the wobble position (U34) of certain tRNAs, forming tRNA-cmnm(5)s(2)U34. In Xylella fastidiosa (strain Temecula1 / ATCC 700964), this protein is tRNA uridine 5-carboxymethylaminomethyl modification enzyme MnmG.